A 103-amino-acid chain; its full sequence is uncharacterized protein (103 aa).

The protein resides in the mitochondrion. This is an uncharacterized protein from Claviceps purpurea (Ergot fungus).